Here is a 202-residue protein sequence, read N- to C-terminus: Small ribosomal subunit protein uS4 (202 aa).

A disordered region spans residues 22–43 (TRKSARRAYPPGQHGQNRKKRS). Residues 90–152 (MRLDNTVFRL…APSRKLVENN (63 aa)) enclose the S4 RNA-binding domain.

This sequence belongs to the universal ribosomal protein uS4 family. As to quaternary structure, part of the 30S ribosomal subunit. Contacts protein S5. The interaction surface between S4 and S5 is involved in control of translational fidelity.

Functionally, one of the primary rRNA binding proteins, it binds directly to 16S rRNA where it nucleates assembly of the body of the 30S subunit. In terms of biological role, with S5 and S12 plays an important role in translational accuracy. In Nostoc sp. (strain PCC 7120 / SAG 25.82 / UTEX 2576), this protein is Small ribosomal subunit protein uS4.